Reading from the N-terminus, the 160-residue chain is Putative oxygenase ATEG_00330 (160 aa).

Positions 24 to 100 (HYFGTALHAK…RNIAADPEFA (77 aa)) constitute an EthD domain.

It belongs to the tpcK family.

Functionally, putative oxygenase; part of the gene cluster that mediates the biosynthesis of isoflavipucine. The PKS part of the PKS-NRPS ATEG_00325 probably assembles a triketide from an acetyl starter and two malonyl-CoA extender units. The poly-beta-keto intermediate would then be fused to the leucine unit by the NRPS part. The resulting amide would be liberated from the PKS-NRPS through reductive release of the linear PKS-NRPS product from the enzyme complex. Further steps in isoflapucine synthesis include a cyclization step, an oxidation step, a hydrolysis step involving a trans-amidation, and an additional oxidation step, leading to flavipucine. Formation of isoflavipucine from flavipucine requires an unusual rearrangement. Alternative rearrangement reactions could build up rubrobramide, representing a branching of flavipucine biosynthesis. The enzymes involved in the post-PKS-NRPS steps have not been identified yet, but the putative oxygenases ATEG_003329 and ATEG_00330 encoded by the cluster could play a role. This chain is Putative oxygenase ATEG_00330, found in Aspergillus terreus (strain NIH 2624 / FGSC A1156).